We begin with the raw amino-acid sequence, 95 residues long: Aspartyl/glutamyl-tRNA(Asn/Gln) amidotransferase subunit C (95 aa).

This sequence belongs to the GatC family. As to quaternary structure, heterotrimer of A, B and C subunits.

It catalyses the reaction L-glutamyl-tRNA(Gln) + L-glutamine + ATP + H2O = L-glutaminyl-tRNA(Gln) + L-glutamate + ADP + phosphate + H(+). It carries out the reaction L-aspartyl-tRNA(Asn) + L-glutamine + ATP + H2O = L-asparaginyl-tRNA(Asn) + L-glutamate + ADP + phosphate + 2 H(+). In terms of biological role, allows the formation of correctly charged Asn-tRNA(Asn) or Gln-tRNA(Gln) through the transamidation of misacylated Asp-tRNA(Asn) or Glu-tRNA(Gln) in organisms which lack either or both of asparaginyl-tRNA or glutaminyl-tRNA synthetases. The reaction takes place in the presence of glutamine and ATP through an activated phospho-Asp-tRNA(Asn) or phospho-Glu-tRNA(Gln). The chain is Aspartyl/glutamyl-tRNA(Asn/Gln) amidotransferase subunit C from Allorhizobium ampelinum (strain ATCC BAA-846 / DSM 112012 / S4) (Agrobacterium vitis (strain S4)).